Here is a 45-residue protein sequence, read N- to C-terminus: METALLLAKLPEAYQIFDPLVDVLPLIPLFFLLLAFVWQASVGFK.

Residues 1 to 8 constitute a propeptide that is removed on maturation; the sequence is METALLLA. A helical transmembrane segment spans residues 24 to 44; that stretch reads LPLIPLFFLLLAFVWQASVGF.

This sequence belongs to the PsbK family. As to quaternary structure, PSII is composed of 1 copy each of membrane proteins PsbA, PsbB, PsbC, PsbD, PsbE, PsbF, PsbH, PsbI, PsbJ, PsbK, PsbL, PsbM, PsbT, PsbX, PsbY, PsbZ, Psb30/Ycf12, peripheral proteins PsbO, CyanoQ (PsbQ), PsbU, PsbV and a large number of cofactors. It forms dimeric complexes.

The protein resides in the cellular thylakoid membrane. Functionally, one of the components of the core complex of photosystem II (PSII). PSII is a light-driven water:plastoquinone oxidoreductase that uses light energy to abstract electrons from H(2)O, generating O(2) and a proton gradient subsequently used for ATP formation. It consists of a core antenna complex that captures photons, and an electron transfer chain that converts photonic excitation into a charge separation. This Microcystis aeruginosa (strain NIES-843 / IAM M-2473) protein is Photosystem II reaction center protein K.